Here is a 363-residue protein sequence, read N- to C-terminus: UDP-N-acetylglucosamine--N-acetylmuramyl-(pentapeptide) pyrophosphoryl-undecaprenol N-acetylglucosamine transferase (363 aa).

UDP-N-acetyl-alpha-D-glucosamine is bound by residues 14-16, asparagine 122, arginine 163, serine 190, and glutamine 285; that span reads TGG.

Belongs to the glycosyltransferase 28 family. MurG subfamily.

It localises to the cell inner membrane. It carries out the reaction di-trans,octa-cis-undecaprenyl diphospho-N-acetyl-alpha-D-muramoyl-L-alanyl-D-glutamyl-meso-2,6-diaminopimeloyl-D-alanyl-D-alanine + UDP-N-acetyl-alpha-D-glucosamine = di-trans,octa-cis-undecaprenyl diphospho-[N-acetyl-alpha-D-glucosaminyl-(1-&gt;4)]-N-acetyl-alpha-D-muramoyl-L-alanyl-D-glutamyl-meso-2,6-diaminopimeloyl-D-alanyl-D-alanine + UDP + H(+). It participates in cell wall biogenesis; peptidoglycan biosynthesis. Cell wall formation. Catalyzes the transfer of a GlcNAc subunit on undecaprenyl-pyrophosphoryl-MurNAc-pentapeptide (lipid intermediate I) to form undecaprenyl-pyrophosphoryl-MurNAc-(pentapeptide)GlcNAc (lipid intermediate II). In Prochlorococcus marinus (strain MIT 9301), this protein is UDP-N-acetylglucosamine--N-acetylmuramyl-(pentapeptide) pyrophosphoryl-undecaprenol N-acetylglucosamine transferase.